Reading from the N-terminus, the 61-residue chain is Insect toxin BsIT2 (61 aa).

The 61-residue stretch at 1–61 folds into the LCN-type CS-alpha/beta domain; it reads DGYIKKSKGC…RWKYETKTCK (61 aa). 4 cysteine pairs are disulfide-bonded: Cys-10-Cys-60, Cys-14-Cys-35, Cys-21-Cys-42, and Cys-25-Cys-44.

This sequence belongs to the long (4 C-C) scorpion toxin superfamily. Sodium channel inhibitor family. Beta subfamily. In terms of tissue distribution, expressed by the venom gland.

The protein resides in the secreted. Depressant insect beta-toxins cause a transient contraction paralysis followed by a slow flaccid paralysis. They bind voltage-independently at site-4 of sodium channels (Nav) and shift the voltage of activation toward more negative potentials thereby affecting sodium channel activation and promoting spontaneous and repetitive firing. This toxin is active only on insects. The protein is Insect toxin BsIT2 of Hottentotta tamulus sindicus (Scorpion).